Consider the following 122-residue polypeptide: Large ribosomal subunit protein bL12 (122 aa).

It belongs to the bacterial ribosomal protein bL12 family. As to quaternary structure, homodimer. Part of the ribosomal stalk of the 50S ribosomal subunit. Forms a multimeric L10(L12)X complex, where L10 forms an elongated spine to which 2 to 4 L12 dimers bind in a sequential fashion. Binds GTP-bound translation factors.

Its function is as follows. Forms part of the ribosomal stalk which helps the ribosome interact with GTP-bound translation factors. Is thus essential for accurate translation. This Sulfurimonas denitrificans (strain ATCC 33889 / DSM 1251) (Thiomicrospira denitrificans (strain ATCC 33889 / DSM 1251)) protein is Large ribosomal subunit protein bL12.